We begin with the raw amino-acid sequence, 273 residues long: Shikimate dehydrogenase (NADP(+)) (273 aa).

Shikimate is bound by residues 14-16 (SKS) and Thr61. Residue Lys65 is the Proton acceptor of the active site. An NADP(+)-binding site is contributed by Asp77. Positions 86 and 102 each coordinate shikimate. NADP(+)-binding positions include 127–131 (GAGGA), 151–156 (NRTGAR), and Met215. Position 217 (Tyr217) interacts with shikimate. NADP(+) is bound at residue Gly239.

The protein belongs to the shikimate dehydrogenase family. In terms of assembly, homodimer.

The catalysed reaction is shikimate + NADP(+) = 3-dehydroshikimate + NADPH + H(+). Its pathway is metabolic intermediate biosynthesis; chorismate biosynthesis; chorismate from D-erythrose 4-phosphate and phosphoenolpyruvate: step 4/7. Its function is as follows. Involved in the biosynthesis of the chorismate, which leads to the biosynthesis of aromatic amino acids. Catalyzes the reversible NADPH linked reduction of 3-dehydroshikimate (DHSA) to yield shikimate (SA). This is Shikimate dehydrogenase (NADP(+)) from Thioalkalivibrio sulfidiphilus (strain HL-EbGR7).